A 221-amino-acid polypeptide reads, in one-letter code: Histone H1C (221 aa).

2 disordered regions span residues 1-43 (MSDP…PPVS) and 113-221 (AAKK…AKKA). The 75-residue stretch at 38–112 (THPPVSEMVF…GALGSFKLPA (75 aa)) folds into the H15 domain. Composition is skewed to basic residues over residues 141–167 (KVKK…KTTK) and 175–221 (AAKK…AKKA).

It belongs to the histone H1/H5 family.

Its subcellular location is the nucleus. The protein localises to the chromosome. Its function is as follows. Histones H1 are necessary for the condensation of nucleosome chains into higher-order structures. The sequence is that of Histone H1C from Chironomus tentans (Midge).